The primary structure comprises 97 residues: Co-chaperonin GroES (97 aa).

It belongs to the GroES chaperonin family. In terms of assembly, heptamer of 7 subunits arranged in a ring. Interacts with the chaperonin GroEL.

It localises to the cytoplasm. Functionally, together with the chaperonin GroEL, plays an essential role in assisting protein folding. The GroEL-GroES system forms a nano-cage that allows encapsulation of the non-native substrate proteins and provides a physical environment optimized to promote and accelerate protein folding. GroES binds to the apical surface of the GroEL ring, thereby capping the opening of the GroEL channel. The polypeptide is Co-chaperonin GroES (Buchnera aphidicola subsp. Geoica urticularia).